The primary structure comprises 158 residues: Endoribonuclease YbeY (158 aa).

Residues H119, H123, and H129 each contribute to the Zn(2+) site.

The protein belongs to the endoribonuclease YbeY family. Zn(2+) is required as a cofactor.

It localises to the cytoplasm. Single strand-specific metallo-endoribonuclease involved in late-stage 70S ribosome quality control and in maturation of the 3' terminus of the 16S rRNA. In Acinetobacter baumannii (strain ACICU), this protein is Endoribonuclease YbeY.